We begin with the raw amino-acid sequence, 532 residues long: MRLFRQLSIQWKITILSFGIVAFALMMVSISLLGYVTSIKEDELSNRTMITAQLVAQNHTVQQWVDAKPEEASRTLQPIVERIRVINDHDYIVLLNMDRIRITHPIPERLQTPFVGGDEDPAFAEHIYLSKAKTEGVVTVRAFMPILNQQREQVGVAVVGSVLPSYADMIQEFWQPALLIGLITALFGFWGSWLLASHIKRQTFNMEPDELAHLLVERDASFNAIHEGVVAINKHEKITIMNEAARRMLGVKEKAIGRNIHEVIPDTKLPEILSIGKPLYQREFYIQGRLVFSNRIPIQIDGETVGAIAIFQDKSDVDRLAEELTGVQAFVDALRVQNHEYSNKLHTIAGLIQLDEGKKALQYIFDLEEEQEEFSGVVMQKIHNDSLAGLLLGKVSRGKELGVQVIIEKDSEFIDHPEGVTTHDLVVIVGNLIDNSLDAFSSTQDQNKTVHVFIGEENDFLKIRVRDNGEGIREEVREKMFVRGFSTKSTSGRGIGLFLIQAIVERVEGKIEVESELNIGTTFSIYLPKKRG.

At 1 to 12 (MRLFRQLSIQWK) the chain is on the cytoplasmic side. A helical membrane pass occupies residues 13 to 33 (ITILSFGIVAFALMMVSISLL). Topologically, residues 34 to 175 (GYVTSIKEDE…YADMIQEFWQ (142 aa)) are extracellular. The helical transmembrane segment at 176-196 (PALLIGLITALFGFWGSWLLA) threads the bilayer. Residues 197-532 (SHIKRQTFNM…FSIYLPKKRG (336 aa)) are Cytoplasmic-facing. Residues 216–279 (VERDASFNAI…PEILSIGKPL (64 aa)) enclose the PAS domain. A Histidine kinase domain is found at 315 to 531 (SDVDRLAEEL…TFSIYLPKKR (217 aa)). Position 339 is a phosphohistidine; by autocatalysis (histidine 339).

The protein localises to the cell membrane. It carries out the reaction ATP + protein L-histidine = ADP + protein N-phospho-L-histidine.. Its function is as follows. Member of the two-component regulatory system DctS/DctR. Probably activates DctR by phosphorylation. Essential for expression of dctP. The protein is Probable C4-dicarboxylate sensor kinase (dctS) of Halalkalibacterium halodurans (strain ATCC BAA-125 / DSM 18197 / FERM 7344 / JCM 9153 / C-125) (Bacillus halodurans).